We begin with the raw amino-acid sequence, 103 residues long: UPF0145 protein BCE_5284 (103 aa).

It belongs to the UPF0145 family.

In Bacillus cereus (strain ATCC 10987 / NRS 248), this protein is UPF0145 protein BCE_5284.